A 170-amino-acid chain; its full sequence is Transcription factor E (170 aa).

Positions 1-93 (MKEAYLYIVE…TWYVDDDVIR (93 aa)) constitute an HTH TFE/IIEalpha-type domain.

This sequence belongs to the TFE family. Monomer. Interaction with RNA polymerase subunits RpoF and RpoE is necessary for Tfe stimulatory transcription activity. Able to interact with Tbp and RNA polymerase in the absence of DNA promoter. Interacts both with the preinitiation and elongation complexes.

Functionally, transcription factor that plays a role in the activation of archaeal genes transcribed by RNA polymerase. Facilitates transcription initiation by enhancing TATA-box recognition by TATA-box-binding protein (Tbp), and transcription factor B (Tfb) and RNA polymerase recruitment. Not absolutely required for transcription in vitro, but particularly important in cases where Tbp or Tfb function is not optimal. It dynamically alters the nucleic acid-binding properties of RNA polymerases by stabilizing the initiation complex and destabilizing elongation complexes. Seems to translocate with the RNA polymerase following initiation and acts by binding to the non template strand of the transcription bubble in elongation complexes. This Pyrobaculum neutrophilum (strain DSM 2338 / JCM 9278 / NBRC 100436 / V24Sta) (Thermoproteus neutrophilus) protein is Transcription factor E.